The primary structure comprises 86 residues: Small ribosomal subunit protein eS27 (86 aa).

The segment at 39 to 61 adopts a C4-type zinc-finger fold; sequence CQGCFNITTVFSHSQTVVVCPGC.

This sequence belongs to the eukaryotic ribosomal protein eS27 family. It depends on Zn(2+) as a cofactor.

This Hordeum vulgare (Barley) protein is Small ribosomal subunit protein eS27 (RPS27).